We begin with the raw amino-acid sequence, 447 residues long: Phosphoglucosamine mutase (447 aa).

S105 serves as the catalytic Phosphoserine intermediate. Mg(2+) is bound by residues S105, D244, D246, and D248. Residue S105 is modified to Phosphoserine.

Belongs to the phosphohexose mutase family. It depends on Mg(2+) as a cofactor. Post-translationally, activated by phosphorylation.

It catalyses the reaction alpha-D-glucosamine 1-phosphate = D-glucosamine 6-phosphate. In terms of biological role, catalyzes the conversion of glucosamine-6-phosphate to glucosamine-1-phosphate. The chain is Phosphoglucosamine mutase from Polynucleobacter asymbioticus (strain DSM 18221 / CIP 109841 / QLW-P1DMWA-1) (Polynucleobacter necessarius subsp. asymbioticus).